Here is a 177-residue protein sequence, read N- to C-terminus: Large ribosomal subunit protein uL6 (177 aa).

The protein belongs to the universal ribosomal protein uL6 family. Part of the 50S ribosomal subunit.

Functionally, this protein binds to the 23S rRNA, and is important in its secondary structure. It is located near the subunit interface in the base of the L7/L12 stalk, and near the tRNA binding site of the peptidyltransferase center. The chain is Large ribosomal subunit protein uL6 from Rhodopseudomonas palustris (strain BisB18).